Here is a 351-residue protein sequence, read N- to C-terminus: Holliday junction branch migration complex subunit RuvB (351 aa).

Residues 4-185 (HDRELVSPEA…FGFVAHMDFY (182 aa)) are large ATPase domain (RuvB-L). Residues leucine 24, arginine 25, glycine 66, lysine 69, threonine 70, threonine 71, 132–134 (EDF), arginine 175, tyrosine 185, and arginine 222 contribute to the ATP site. Position 70 (threonine 70) interacts with Mg(2+). Positions 186-256 (SPEELELILH…CARAALSLYE (71 aa)) are small ATPAse domain (RuvB-S). Residues 259 to 351 (DEGLDRLDRA…AALFDPDEEP (93 aa)) are head domain (RuvB-H). Residues arginine 314 and arginine 319 each contribute to the DNA site.

Belongs to the RuvB family. As to quaternary structure, homohexamer. Forms an RuvA(8)-RuvB(12)-Holliday junction (HJ) complex. HJ DNA is sandwiched between 2 RuvA tetramers; dsDNA enters through RuvA and exits via RuvB. An RuvB hexamer assembles on each DNA strand where it exits the tetramer. Each RuvB hexamer is contacted by two RuvA subunits (via domain III) on 2 adjacent RuvB subunits; this complex drives branch migration. In the full resolvosome a probable DNA-RuvA(4)-RuvB(12)-RuvC(2) complex forms which resolves the HJ.

The protein localises to the cytoplasm. The catalysed reaction is ATP + H2O = ADP + phosphate + H(+). Its function is as follows. The RuvA-RuvB-RuvC complex processes Holliday junction (HJ) DNA during genetic recombination and DNA repair, while the RuvA-RuvB complex plays an important role in the rescue of blocked DNA replication forks via replication fork reversal (RFR). RuvA specifically binds to HJ cruciform DNA, conferring on it an open structure. The RuvB hexamer acts as an ATP-dependent pump, pulling dsDNA into and through the RuvAB complex. RuvB forms 2 homohexamers on either side of HJ DNA bound by 1 or 2 RuvA tetramers; 4 subunits per hexamer contact DNA at a time. Coordinated motions by a converter formed by DNA-disengaged RuvB subunits stimulates ATP hydrolysis and nucleotide exchange. Immobilization of the converter enables RuvB to convert the ATP-contained energy into a lever motion, pulling 2 nucleotides of DNA out of the RuvA tetramer per ATP hydrolyzed, thus driving DNA branch migration. The RuvB motors rotate together with the DNA substrate, which together with the progressing nucleotide cycle form the mechanistic basis for DNA recombination by continuous HJ branch migration. Branch migration allows RuvC to scan DNA until it finds its consensus sequence, where it cleaves and resolves cruciform DNA. In Thermobifida fusca (strain YX), this protein is Holliday junction branch migration complex subunit RuvB.